Here is a 285-residue protein sequence, read N- to C-terminus: Urease accessory protein UreD (285 aa).

It belongs to the UreD family. In terms of assembly, ureD, UreF and UreG form a complex that acts as a GTP-hydrolysis-dependent molecular chaperone, activating the urease apoprotein by helping to assemble the nickel containing metallocenter of UreC. The UreE protein probably delivers the nickel.

The protein localises to the cytoplasm. Its function is as follows. Required for maturation of urease via the functional incorporation of the urease nickel metallocenter. The protein is Urease accessory protein UreD of Picosynechococcus sp. (strain ATCC 27264 / PCC 7002 / PR-6) (Agmenellum quadruplicatum).